The sequence spans 245 residues: Putative outer membrane protein RBE_0022 (245 aa).

A signal peptide spans 1–23 (MIRMSKRLGVILFVSCISINSFA).

This sequence belongs to the OmpW/AlkL family.

The protein localises to the cell outer membrane. This Rickettsia bellii (strain RML369-C) protein is Putative outer membrane protein RBE_0022.